The primary structure comprises 158 residues: Protein ORF4 (158 aa).

In terms of biological role, acts by interacting with multiple viral and host proteins to enhance the activity of viral RNA-dependent RNA polymerase. The protein is Protein ORF4 of Hepatitis E virus genotype 1 (isolate Human/Pakistan/Sar-55) (HEV-1).